The sequence spans 344 residues: Protein RecA (344 aa).

66–73 is a binding site for ATP; sequence GPESSGKT.

This sequence belongs to the RecA family.

Its subcellular location is the cytoplasm. Its function is as follows. Can catalyze the hydrolysis of ATP in the presence of single-stranded DNA, the ATP-dependent uptake of single-stranded DNA by duplex DNA, and the ATP-dependent hybridization of homologous single-stranded DNAs. It interacts with LexA causing its activation and leading to its autocatalytic cleavage. This chain is Protein RecA, found in Methylobacillus flagellatus (strain ATCC 51484 / DSM 6875 / VKM B-1610 / KT).